We begin with the raw amino-acid sequence, 204 residues long: NADH-quinone oxidoreductase subunit C (204 aa).

It belongs to the complex I 30 kDa subunit family. NDH-1 is composed of 14 different subunits. Subunits NuoB, C, D, E, F, and G constitute the peripheral sector of the complex.

The protein localises to the cell inner membrane. The catalysed reaction is a quinone + NADH + 5 H(+)(in) = a quinol + NAD(+) + 4 H(+)(out). NDH-1 shuttles electrons from NADH, via FMN and iron-sulfur (Fe-S) centers, to quinones in the respiratory chain. The immediate electron acceptor for the enzyme in this species is believed to be ubiquinone. Couples the redox reaction to proton translocation (for every two electrons transferred, four hydrogen ions are translocated across the cytoplasmic membrane), and thus conserves the redox energy in a proton gradient. The protein is NADH-quinone oxidoreductase subunit C of Rhodopseudomonas palustris (strain ATCC BAA-98 / CGA009).